A 298-amino-acid chain; its full sequence is Isochorismatase domain-containing protein 1 (298 aa).

Phosphotyrosine is present on tyrosine 160. Lysine 279 carries the N6-succinyllysine modification.

This sequence belongs to the isochorismatase family.

In Bos taurus (Bovine), this protein is Isochorismatase domain-containing protein 1 (ISOC1).